The chain runs to 1025 residues: Dihydropyrimidine dehydrogenase [NADP(+)] (1025 aa).

Residues Glu-69–Phe-100 form the 4Fe-4S ferredoxin-type 1 domain. Cys-79, Cys-82, Cys-87, and Cys-91 together coordinate [4Fe-4S] cluster. An FAD-binding site is contributed by Val-129. 4 residues coordinate [4Fe-4S] cluster: Cys-130, Cys-136, Cys-140, and Gln-156. Residues Gly-194–Ala-198, Glu-218–Ile-226, Arg-235, and Leu-261 contribute to the FAD site. Residues Ala-340–Thr-343, Arg-364–Lys-365, and Arg-371 contribute to the NADP(+) site. The residue at position 384 (Lys-384) is an N6-acetyllysine. NADP(+) contacts are provided by residues Ala-437–Gly-439 and Asp-481–Asn-487. Gly-480–Thr-489 contacts FAD. Residues Ser-550 and Lys-574–Thr-575 each bind FMN. Substrate contacts are provided by residues Asn-609 and Asn-668 to Ser-670. Cys-671 acts as the Proton acceptor in catalysis. FMN is bound at residue Lys-709. A substrate-binding site is contributed by Asn-736–Thr-737. FMN contacts are provided by residues Gly-767, Thr-793 to Gly-795, and Cys-816 to Ser-817. 2 4Fe-4S ferredoxin-type domains span residues Val-944 to Glu-976 and His-978 to Arg-1007. The [4Fe-4S] cluster site is built by Cys-953, Cys-956, Cys-959, Cys-963, Cys-986, Cys-989, Cys-992, and Cys-996.

This sequence belongs to the dihydropyrimidine dehydrogenase family. In terms of assembly, homodimer. It depends on FAD as a cofactor. The cofactor is FMN. Requires [4Fe-4S] cluster as cofactor.

It is found in the cytoplasm. The enzyme catalyses 5,6-dihydrouracil + NADP(+) = uracil + NADPH + H(+). The catalysed reaction is 5,6-dihydrothymine + NADP(+) = thymine + NADPH + H(+). Its pathway is amino-acid biosynthesis; beta-alanine biosynthesis. Its activity is regulated as follows. Inactivated by 5-iodouracil. In terms of biological role, involved in pyrimidine base degradation. Catalyzes the reduction of uracil and thymine. Also involved the degradation of the chemotherapeutic drug 5-fluorouracil. This Bos taurus (Bovine) protein is Dihydropyrimidine dehydrogenase [NADP(+)] (DPYD).